The primary structure comprises 340 residues: GTP 3',8-cyclase (340 aa).

The region spanning 8–227 (KLGRPIRDLR…DMIESHFDIE (220 aa)) is the Radical SAM core domain. Arg17 provides a ligand contact to GTP. 2 residues coordinate [4Fe-4S] cluster: Cys24 and Cys28. Tyr30 is a binding site for S-adenosyl-L-methionine. A [4Fe-4S] cluster-binding site is contributed by Cys31. A GTP-binding site is contributed by Arg71. Gly75 contacts S-adenosyl-L-methionine. Thr102 contributes to the GTP binding site. Ser126 serves as a coordination point for S-adenosyl-L-methionine. A GTP-binding site is contributed by Lys163. Met197 contributes to the S-adenosyl-L-methionine binding site. [4Fe-4S] cluster is bound by residues Cys261 and Cys264. 266 to 268 (RAR) lines the GTP pocket. Cys278 is a binding site for [4Fe-4S] cluster.

This sequence belongs to the radical SAM superfamily. MoaA family. As to quaternary structure, monomer and homodimer. It depends on [4Fe-4S] cluster as a cofactor.

It carries out the reaction GTP + AH2 + S-adenosyl-L-methionine = (8S)-3',8-cyclo-7,8-dihydroguanosine 5'-triphosphate + 5'-deoxyadenosine + L-methionine + A + H(+). It functions in the pathway cofactor biosynthesis; molybdopterin biosynthesis. Catalyzes the cyclization of GTP to (8S)-3',8-cyclo-7,8-dihydroguanosine 5'-triphosphate. The sequence is that of GTP 3',8-cyclase from Staphylococcus haemolyticus (strain JCSC1435).